The primary structure comprises 711 residues: MLNPIVRKFQYGQHTVTLETGMMARQATAAVMVSMDDTAVFVTVVGQKKAKPGQDFFPLTVNYQERTYAAGRIPGSFFRREGRPSEGETLIARLIDRPIRPLFPEGFVNEVQVIATVVSVNPQVNPDIVAMIGASAALSLSGIPFNGPIGAARVGYINDQYVLNPTQDELKESKLDLVVAGTEAAVLMVESEAELLSEDQMLGAVVFGHEQQQVVIQNINELVKEAGKPRWDWQPEPVNEALNARVAALAEARLSDAYRITDKQERYAQVDVIKSETIATLLAEDETLDENELGEILHAIEKNVVRSRVLAGEPRIDGREKDMIRGLDVRTGVLPRTHGSALFTRGETQALVTATLGTARDAQVLDELMGERTDTFLFHYNFPPYSVGETGMVGSPKRREIGHGRLAKRGVLAVMPDMDKFPYTVRVVSEITESNGSSSMASVCGASLALMDAGVPIKAAVAGIAMGLVKEGDNYVVLSDILGDEDHLGDMDFKVAGSRDGISALQMDIKIEGITKEIMQVALNQAKGARLHILGVMEQAINAPRGDISEFAPRIHTIKINPDKIKDVIGKGGSVIRALTEETGTTIEIEDDGTVKIAATDGEKAKHAIRRIEEITAEIEVGRVYTGKVTRIVDFGAFVAIGGGKEGLVHISQIADKRVEKVTDYLQMGQEVPVKVLEVDRQGRIRLSIKEATEQSQPAAAPEAPAAEQGE.

Mg(2+)-binding residues include Asp486 and Asp492. A KH domain is found at 553–612 (PRIHTIKINPDKIKDVIGKGGSVIRALTEETGTTIEIEDDGTVKIAATDGEKAKHAIRRI). Residues 622 to 690 (GRVYTGKVTR…RQGRIRLSIK (69 aa)) form the S1 motif domain. The tract at residues 689–711 (IKEATEQSQPAAAPEAPAAEQGE) is disordered. Residues 694-711 (EQSQPAAAPEAPAAEQGE) are compositionally biased toward low complexity.

This sequence belongs to the polyribonucleotide nucleotidyltransferase family. In terms of assembly, component of the RNA degradosome, which is a multiprotein complex involved in RNA processing and mRNA degradation. The cofactor is Mg(2+).

The protein localises to the cytoplasm. It catalyses the reaction RNA(n+1) + phosphate = RNA(n) + a ribonucleoside 5'-diphosphate. Its function is as follows. Involved in mRNA degradation. Catalyzes the phosphorolysis of single-stranded polyribonucleotides processively in the 3'- to 5'-direction. This is Polyribonucleotide nucleotidyltransferase from Escherichia coli (strain SE11).